The following is a 358-amino-acid chain: Phospho-N-acetylmuramoyl-pentapeptide-transferase (358 aa).

The next 10 membrane-spanning stretches (helical) occupy residues 24–44 (FRSIYAMITALLLAFIVGPWV), 73–93 (TMGGVLILVCIVLPTLLWADL), 95–115 (NVFIWLTLLIIVGYGVLGFVD), 134–154 (MFWQMLLAAGVGIFLFYLPGF), 169–189 (ELGILFIPFVMLVIVGASNAV), 197–217 (GLAIGPVAINAATYLLFCYIA), 233–253 (GAGELAVLCGAMVGAGLGFLW), 261–281 (VFMGDVGSLSLGGALGTLAVL), 286–306 (ILLVIVGGVFVVEALSVIFQV), and 335–355 (KIIVRFWIITIILALVAISTL).

Belongs to the glycosyltransferase 4 family. MraY subfamily. The cofactor is Mg(2+).

Its subcellular location is the cell inner membrane. It carries out the reaction UDP-N-acetyl-alpha-D-muramoyl-L-alanyl-gamma-D-glutamyl-meso-2,6-diaminopimeloyl-D-alanyl-D-alanine + di-trans,octa-cis-undecaprenyl phosphate = di-trans,octa-cis-undecaprenyl diphospho-N-acetyl-alpha-D-muramoyl-L-alanyl-D-glutamyl-meso-2,6-diaminopimeloyl-D-alanyl-D-alanine + UMP. Its pathway is cell wall biogenesis; peptidoglycan biosynthesis. In terms of biological role, catalyzes the initial step of the lipid cycle reactions in the biosynthesis of the cell wall peptidoglycan: transfers peptidoglycan precursor phospho-MurNAc-pentapeptide from UDP-MurNAc-pentapeptide onto the lipid carrier undecaprenyl phosphate, yielding undecaprenyl-pyrophosphoryl-MurNAc-pentapeptide, known as lipid I. The chain is Phospho-N-acetylmuramoyl-pentapeptide-transferase from Citrifermentans bemidjiense (strain ATCC BAA-1014 / DSM 16622 / JCM 12645 / Bem) (Geobacter bemidjiensis).